Here is an 88-residue protein sequence, read N- to C-terminus: MKLSQIALICIVIASLFAMHECERLEATEEEKSSKIYVPPCYETICSFSLKKDCWCCFEPLVHKNLCWGVHDFPNAKELCFNEYSKKI.

The signal sequence occupies residues methionine 1–cysteine 22. 3 disulfide bridges follow: cysteine 41/cysteine 56, cysteine 54/cysteine 80, and cysteine 57/cysteine 67.

This sequence belongs to the MEG family. Expressed in stems, leaves and flowers.

The sequence is that of EMBRYO SURROUNDING FACTOR 1-like protein 3 (ESFL3) from Arabidopsis thaliana (Mouse-ear cress).